A 521-amino-acid polypeptide reads, in one-letter code: Insulinoma-associated protein 1 (521 aa).

Residues 1–12 (MPRGFLVKRSKK) show a composition bias toward basic residues. The tract at residues 1 to 20 (MPRGFLVKRSKKSTPVSYRV) is SNAG domain. 3 disordered regions span residues 1 to 59 (MPRG…PPAL), 76 to 107 (GPPP…PTRP), and 180 to 230 (AEAA…KPKA). Residues 2-7 (PRGFLV) are required and sufficient for interaction with KDM1A. Positions 43–56 (PPVPSPGPLPPPPP) are necessary for interaction with CCND1. Composition is skewed to pro residues over residues 43-58 (PPVP…PPPA) and 76-85 (GPPPPPPPGP). Residues 209–223 (AAVATEPPAKAAKAP) are compositionally biased toward low complexity. Residues 272–292 (FICQLCKEEYADPFALAQHKC) form a C2H2-type 1; atypical zinc finger. Residues 300 to 322 (YRCPECAKVFSCPANLASHRRWH) form a C2H2-type 2 zinc finger. The tract at residues 320 to 369 (RWHKPRPVPAAARAPEPEAATRAEAREAAGGGSSDRDTPSPGGVSESGSE) is disordered. Over residues 334 to 346 (PEPEAATRAEARE) the composition is skewed to basic and acidic residues. The segment at 373–395 (YECHHCAKKFRRQAYLRKHLLAH) adopts a C2H2-type 3 zinc-finger fold. The tract at residues 398–419 (ALQAKGAPPPPPPPPPPAEDIL) is disordered. A compositionally biased stretch (pro residues) spans 404-415 (APPPPPPPPPPA). 2 consecutive C2H2-type zinc fingers follow at residues 452-475 (HLCP…RLLH) and 480-503 (FPCK…NKCH).

The protein belongs to the INSM1 family. In terms of assembly, interacts (via the N-terminal region) with CCND1 (via cyclin N-terminal domain); the interaction competes with the binding of CCND1 to CDK4 during cell cycle progression and increases its transcriptional repressor activity. Interacts with HDAC3; the interaction increases its transcriptional repressor activity. Interacts (via the SNAG domain) with HDAC1. Interacts (via the SNAG domain) with HDAC2. Interacts (via the SNAG domain) with KDM1A. Interacts (via the SNAG domain) with RCOR1. Interacts with SORBS1. Expressed in adrenal gland. Expressed in the dentate gyrus of the hippocampus and the wall of the lateral ventricle. Expressed in pancreatic and intestinal endocrine cells.

Its subcellular location is the nucleus. Functionally, sequence-specific DNA-binding transcriptional regulator that plays a key role in neurogenesis and neuroendocrine cell differentiation during embryonic and/or fetal development. Binds to the consensus sequence 5'-[TG][TC][TC][TT][GA]GGG[CG]A-3' in target promoters. Acts as a transcriptional repressor of NEUROD1 and INS expression via its interaction with cyclin CCND1 in a cell cycle-independent manner. Negatively regulates skeletal muscle-specific gene expression in endocrine cells of the pituitary by inhibiting the Notch signaling pathway. Represses target gene transcription by recruiting chromatin-modifying factors, such as HDAC1, HDAC2, HDAC3, KDM1A and RCOR1 histone deacetylases. Binds to its own promoter, suggesting autoregulation as a self-control feedback mechanism. Competes with histone H3 for the same binding site on the histone demethylase complex formed by KDM1A and RCOR1, and thereby inhibits demethylation of histone H3 at 'Lys-4'. Promotes the generation and expansion of neuronal basal progenitor cells in the developing neocortex. Involved in the differentiation of endocrine cells of the developing anterior pituitary gland, of the pancreas and intestine, and of sympatho-adrenal cells in the peripheral nervous system. Promotes cell cycle signaling arrest and inhibition of cellular proliferation. This is Insulinoma-associated protein 1 (Insm1) from Mus musculus (Mouse).